A 123-amino-acid polypeptide reads, in one-letter code: Insulin-like peptide-1 (123 aa).

The first 24 residues, 1 to 24, serve as a signal peptide directing secretion; sequence MTTSSYFLLVALGLLLYVCQSSFG. Disulfide bonds link Cys-29–Cys-106, Cys-41–Cys-109, Cys-53–Cys-122, and Cys-108–Cys-113. Pro-34 carries the post-translational modification 4-hydroxyproline; partial. Residues 59–102 constitute a propeptide, c peptide; it reads EQGGANNARAYTGRTSSLMKRRGFLSLLKKRGKRDEGSLQRSGR. Glu-107 bears the 4-carboxyglutamate mark. Glu-117 is subject to 4-carboxyglutamate; partial.

The protein belongs to the insulin family. In terms of assembly, heterodimer of A and B chains; disulfide-linked. In terms of tissue distribution, expressed by the venom duct.

It localises to the secreted. In terms of biological role, this venom insulin facilitates prey capture by rapidly inducing hypoglycemic shock. Intraperitoneal injection of this peptide into zebrafish lowers blood glucose with the same potency than human insulin. In vivo, when applied to water, this peptide reduces overall locomotor activity of zebrafish larvae, observed as a significant decrease in the percentage of time spent swimming and movement frequency. The polypeptide is Insulin-like peptide-1 (Conus victoriae (Queen Victoria cone)).